A 776-amino-acid chain; its full sequence is Palmitoyltransferase AKR1 (776 aa).

Over 1 to 311 (MDQEMTTVAS…MEGKLGPRNT (311 aa)) the chain is Cytoplasmic. A disordered region spans residues 38–58 (RLDEGSSIRGGELERDSQEVG). ANK repeat units lie at residues 68-97 (CHDLDIHALAQRGDTAAIAAMLQENPSLNL), 103-132 (QDVTPLHWAAINAHMGTCRLLIDSGADIDA), 137-166 (LKATPLQWAARNGHLYVVHLLISRGADPNI), 170-199 (QGFNTLHLITHSSAVMPLLYMLHQPVAIDE), 203-232 (DGHTALMWAAYQGDALSVDLLIRHGASVNS), and 236-265 (AGMTPLHWAAVKGNKVSIMHLVEAGASLDA). The chain crosses the membrane as a helical span at residues 312–332 (ILAIFLLPIAVLWLIFSTFKW). The Lumenal segment spans residues 333-336 (LPVY). A helical membrane pass occupies residues 337–357 (VGVPFAIAEFMGMQYTVVLVL). Topologically, residues 358-368 (LGHIKAQDKVS) are cytoplasmic. Residues 369–389 (TSNYFASIITASLIWVGYCWI) form a helical membrane-spanning segment. The Lumenal portion of the chain corresponds to 390–402 (SRFAVNTPGYAFS). Residues 403 to 423 (NLGFIIMFVGCCWTFWTAIVT) traverse the membrane as a helical segment. Over 424–498 (DPGFVPKGQQ…NCVGAKNHRS (75 aa)) the chain is Cytoplasmic. In terms of domain architecture, DHHC spans 454–504 (NFCIVCMARKPLRSKHCRTCNRCVARFDHHCPWIWNCVGAKNHRSFLLFVL). Cys-484 (S-palmitoyl cysteine intermediate) is an active-site residue. The chain crosses the membrane as a helical span at residues 499–519 (FLLFVLFLIGGIILFIRLTIA). At 520 to 553 (YIQQNAPEYIPTPNPGLTTCDISTTLCQAGDFDP) the chain is on the lumenal side. A helical membrane pass occupies residues 554 to 574 (FLLCMALWSTLQLTWTSVLAI). Residues 575-776 (SHLWQVSRQM…RYEVVSEQEV (202 aa)) are Cytoplasmic-facing. Residues 628–665 (GAGEEAAGPPGAEAGPEGNALLPPPGGHVHGPQCRHGD) are disordered. Residues 629–645 (AGEEAAGPPGAEAGPEG) show a composition bias toward low complexity.

This sequence belongs to the DHHC palmitoyltransferase family. AKR/ZDHHC17 subfamily.

Its subcellular location is the early endosome membrane. The protein localises to the golgi apparatus membrane. The catalysed reaction is L-cysteinyl-[protein] + hexadecanoyl-CoA = S-hexadecanoyl-L-cysteinyl-[protein] + CoA. Functionally, palmitoyltransferase specific for casein kinase 1. This is Palmitoyltransferase AKR1 (AKR1) from Cryptococcus neoformans var. neoformans serotype D (strain B-3501A) (Filobasidiella neoformans).